The sequence spans 1249 residues: Clustered mitochondria protein homolog (1249 aa).

Residues methionine 1 to asparagine 34 are disordered. One can recognise a Clu domain in the interval aspartate 321–glutamine 565. Disordered stretches follow at residues valine 610–aspartate 638 and valine 874–proline 907. Over residues alanine 613–aspartate 638 the composition is skewed to basic and acidic residues. TPR repeat units lie at residues alanine 975–threonine 1008, isoleucine 1017–isoleucine 1050, and isoleucine 1059–leucine 1092. The segment covering threonine 1178–glutamine 1191 has biased composition (polar residues). The disordered stretch occupies residues threonine 1178–alanine 1249. The segment covering serine 1192–serine 1205 has biased composition (low complexity).

It belongs to the CLU family. As to quaternary structure, may associate with the eukaryotic translation initiation factor 3 (eIF-3) complex.

The protein resides in the cytoplasm. In terms of biological role, mRNA-binding protein involved in proper cytoplasmic distribution of mitochondria. In Aspergillus oryzae (strain ATCC 42149 / RIB 40) (Yellow koji mold), this protein is Clustered mitochondria protein homolog.